A 120-amino-acid chain; its full sequence is Large ribosomal subunit protein uL18 (120 aa).

Belongs to the universal ribosomal protein uL18 family. Part of the 50S ribosomal subunit; part of the 5S rRNA/L5/L18/L25 subcomplex. Contacts the 5S and 23S rRNAs.

Functionally, this is one of the proteins that bind and probably mediate the attachment of the 5S RNA into the large ribosomal subunit, where it forms part of the central protuberance. This is Large ribosomal subunit protein uL18 from Clostridium botulinum (strain Eklund 17B / Type B).